Here is a 52-residue protein sequence, read N- to C-terminus: Creatine kinase B-type (52 aa).

In terms of domain architecture, Phosphagen kinase C-terminal spans 1-52; the sequence is AKVLTLDLYKKLRDKSTPSGFTLDDIIQNEHLGYVLTCPSNLGTXLRAXVHV. A Phosphagen kinase N-terminal domain is found at 1–52; that stretch reads AKVLTLDLYKKLRDKSTPSGFTLDDIIQNEHLGYVLTCPSNLGTXLRAXVHV. 2 residues coordinate ATP: R13 and R47.

The protein belongs to the ATP:guanido phosphotransferase family. Dimer of identical or non-identical chains, which can be either B (brain type) or M (muscle type). With MM being the major form in skeletal muscle and myocardium, MB existing in myocardium, and BB existing in many tissues, especially brain. In terms of tissue distribution, expressed in rectal gland, brain, skeletal muscle (at protein level).

It is found in the cytoplasm. The protein localises to the cytosol. It localises to the mitochondrion. The protein resides in the basal cell membrane. It carries out the reaction creatine + ATP = N-phosphocreatine + ADP + H(+). Its function is as follows. Reversibly catalyzes the transfer of phosphate between ATP and various phosphogens (e.g. creatine phosphate). Creatine kinase isoenzymes play a central role in energy transduction in tissues with large, fluctuating energy demands, such as skeletal muscle, heart, brain and spermatozoa. The protein is Creatine kinase B-type of Squalus acanthias (Spiny dogfish).